A 276-amino-acid polypeptide reads, in one-letter code: MKEKIALFGAGGKMGVRLAKNLLKSDYRVSHVEVSEVGKKRLKDELGLECVSTEAALDNVDVVILAVPDTIIGKIAAQIAPQLRPGTMVMTLDAAAPFAGHLPDRPDLTYFVAHPCHPLIFNDETDPEARRDYFGGGAAKQSITSALMQGPEEAFDLGEAVAKVIYAPILRSYRLTVDQMALLEPGLSETICATLLQVMREAMDETVRRGVPKEAARDFLLGHMNILGAVIFNEIPGAFSDACNKAIEFGKPRLMRDDWIKVFDREEIAESIRRIT.

NAD(+) contacts are provided by residues 12–14 (GKM), E33, and D69. The Zn(2+) site is built by H114 and E184.

Belongs to the ApnO family. It depends on Zn(2+) as a cofactor.

It catalyses the reaction D-apionate + NAD(+) = 3-oxoisoapionate + NADH + H(+). Its pathway is carbohydrate metabolism. Functionally, involved in catabolism of D-apiose. Catalyzes the conversion of D-apionate to 3-oxo-isoapionate. This Cupriavidus necator (strain ATCC 43291 / DSM 13513 / CCUG 52238 / LMG 8453 / N-1) (Ralstonia eutropha) protein is D-apionate oxidoisomerase.